We begin with the raw amino-acid sequence, 291 residues long: Ajmaline N-methyltransferase (291 aa).

The tract at residues 71–80 is SAM motif I; that stretch reads MLDVGCGIGG. The Vacuolar targeting signal motif lies at 133–139; it reads DGAFDLV. The tract at residues 134–142 is SAM motif II; the sequence is GAFDLVLSI. Residues 161–170 form an SAM motif III region; sequence VAASGATIII.

The protein belongs to the class I-like SAM-binding methyltransferase superfamily. gTMT family. Homodimer. In terms of tissue distribution, mainly expressed in roots, but barely detectable in stems and flowers.

The protein resides in the vacuole membrane. It carries out the reaction ajmaline + S-adenosyl-L-methionine = 4-methylajmaline + S-adenosyl-L-homocysteine + H(+). The enzyme catalyses norajmaline + S-adenosyl-L-methionine = 4-methylnorajmaline + S-adenosyl-L-homocysteine + H(+). It participates in alkaloid biosynthesis; ajmaline biosynthesis. Functionally, N-methyltransferase involved in the biosynthesis of ajmaline-type monoterpenoid indole alkaloids (MIAs) natural products, important plant-derived pharmaceuticals used in the therapy of heart disorders. Catalyzes the indole N-methylation of ajmaline to produce 4-methylajmaline. Also able, with a lower efficiency, to mediates the conversion of norajmaline to 4-methylnorajmaline. The polypeptide is Ajmaline N-methyltransferase (Rauvolfia serpentina (Serpentine wood)).